The primary structure comprises 990 residues: Transposase for transposon Tn3926 (990 aa).

The disordered stretch occupies residues 673-698 (GDGTTSSSDGQNFRTGSKAESTGHIN). Over residues 674-696 (DGTTSSSDGQNFRTGSKAESTGH) the composition is skewed to polar residues.

It belongs to the transposase 7 family.

Functionally, required for transposition of transposon Tn3926. This chain is Transposase for transposon Tn3926 (tnpA), found in Escherichia coli.